The chain runs to 236 residues: Uridylate kinase (236 aa).

Residue 10–13 participates in ATP binding; it reads KLSG. Position 52 (G52) interacts with UMP. 2 residues coordinate ATP: G53 and R57. UMP contacts are provided by residues D72 and 133-140; that span reads TGNPFFTT. ATP contacts are provided by T160, Y166, and D169.

The protein belongs to the UMP kinase family. Homohexamer.

The protein resides in the cytoplasm. It carries out the reaction UMP + ATP = UDP + ADP. It functions in the pathway pyrimidine metabolism; CTP biosynthesis via de novo pathway; UDP from UMP (UMPK route): step 1/1. With respect to regulation, inhibited by UTP. Its function is as follows. Catalyzes the reversible phosphorylation of UMP to UDP. The sequence is that of Uridylate kinase from Bacteroides thetaiotaomicron (strain ATCC 29148 / DSM 2079 / JCM 5827 / CCUG 10774 / NCTC 10582 / VPI-5482 / E50).